An 88-amino-acid chain; its full sequence is Toxin ICK-12 (88 aa).

An N-terminal signal peptide occupies residues 1–19 (MKSIVYMLLFCTFTVVILG). Disulfide bonds link C41/C55, C41/C78, C54/C67, and C81/C88.

The protein belongs to the neurotoxin 27 (Jztx-72) family. ICK-41 subfamily. In terms of tissue distribution, expressed by the venom gland.

The protein resides in the secreted. In terms of biological role, probable neurotoxin with ion channel impairing activity. The polypeptide is Toxin ICK-12 (Trittame loki (Brush-footed trapdoor spider)).